The sequence spans 25 residues: Css54 (25 aa).

Expressed by the venom gland.

The protein localises to the secreted. It is found in the target cell membrane. Its function is as follows. Amphipathic peptide that shows antibacterial activity against E.coli (MIC=12.5 ug/ml) and S.aureus (MIC=12.5 ug/ml). Has hemolytic activity against human erythrocytes (25 uM provokes 83% of hemolysis). May act by disrupting the integrity of the bacterial cell membrane. Increases efficacy of antibiotics (ethambutol, pyrazinamide, isoniazid, rifampicin) when tested against S.aureus, probably by facilitating their incorporation into the bacteria. This chain is Css54, found in Centruroides suffusus (Durango bark scorpion).